A 292-amino-acid polypeptide reads, in one-letter code: MTGSLSEIKVRITSTQKTGKITSAMKMVSSAKLVKSEQAAKDFQIYASKIRQITTDLLHSDLRKGSSNPMLISRPIKKTAYIVITSDKGLVGAYNSTILKAVMDTIKDYHPKGDDYTIISIGGMGSDFFRARHIPVAFELRGLEDNPSFEEVNRIISKSVEMYKNELFDELYVCYSHHINSLTSQVRVEKMLPISDLDADEASEDNVANFELEPSREAILEQLLPQYAESLIYGAIIDAKTAEHAAGMTAMQTATDNADKVIEDLTKLYNRVRQAAITQEITEIVAGANALD.

Belongs to the ATPase gamma chain family. As to quaternary structure, F-type ATPases have 2 components, CF(1) - the catalytic core - and CF(0) - the membrane proton channel. CF(1) has five subunits: alpha(3), beta(3), gamma(1), delta(1), epsilon(1). CF(0) has three main subunits: a, b and c.

It is found in the cell membrane. In terms of biological role, produces ATP from ADP in the presence of a proton gradient across the membrane. The gamma chain is believed to be important in regulating ATPase activity and the flow of protons through the CF(0) complex. This chain is ATP synthase gamma chain, found in Streptococcus mutans serotype c (strain ATCC 700610 / UA159).